The chain runs to 312 residues: Olfactory receptor 2C1 (312 aa).

At 1–24 (MEVDSNSSSGSFILMGVSDHPHLE) the chain is on the extracellular side. N-linked (GlcNAc...) asparagine glycosylation is present at N6. The helical transmembrane segment at 25–48 (IIFFAVILASYLLTLVGNLTIILL) threads the bilayer. The Cytoplasmic segment spans residues 49 to 57 (SRLDARLHT). The helical transmembrane segment at 58–79 (PMYFFLSNLSSLDLAFTTSSVP) threads the bilayer. Residues 80-100 (QMLKNLWGPDKTISYGGCVTQ) are Extracellular-facing. Residues C97 and C189 are joined by a disulfide bond. The helical transmembrane segment at 101–120 (LYVFLWLGATECILLVVMAF) threads the bilayer. The Cytoplasmic segment spans residues 121-139 (DRYVAVCRPLHYMTVMNPR). The helical transmembrane segment at 140-160 (LCWGLAAISWLGGLGNSVIQS) threads the bilayer. Residues 161–200 (TFTLQLPFCGHRKVDNFLCEVPAMIKLACGDTSLNEAVLN) are Extracellular-facing. The helical transmembrane segment at 201 to 222 (GVCTFFTVVPVSVILVSYCFIA) threads the bilayer. The Cytoplasmic segment spans residues 223–236 (QAVMKIRSVEGRRK). Residues 237 to 261 (AFNTCVSHLVVVFLFYGSAIYGYLL) form a helical membrane-spanning segment. Residues 262–272 (PAKSSNQSQGK) lie on the Extracellular side of the membrane. Residues 273 to 292 (FISLFYSVVTPMVNPLIYTL) traverse the membrane as a helical segment. The Cytoplasmic portion of the chain corresponds to 293–312 (RNKEVKGALGRLLGKGRGAS).

It belongs to the G-protein coupled receptor 1 family. Olfactory epithelium. Present in various subcellular compartments of the olfactory sensory neurons, particularly in the axonal processes and neve terminals.

The protein localises to the cell membrane. Functionally, olfactory receptor that is activated by the binding of organosulfur odorants with thioether groups such as (methylthio)methanetiol (MTMT). Also binds odorants acetophenone and benzaldehyde. The activity of this receptor is mediated by G proteins which activate adenylyl cyclase. May be involved in the molecular processes underlying fasciculation and targeting of olfactory axons. The polypeptide is Olfactory receptor 2C1 (Mus musculus (Mouse)).